Reading from the N-terminus, the 1441-residue chain is Lysophospholipase NTE1 (1441 aa).

At 1–22 (MWLTSYVLPRLKNILLLQFHIT) the chain is on the lumenal side. The helical transmembrane segment at 23–43 (LPLNYLVLLLLSTVIITYLFL) threads the bilayer. Over 44 to 1441 (RTRILSNYSQ…ENMLQRRNSI (1398 aa)) the chain is Cytoplasmic. Disordered regions lie at residues 154–173 (SNPS…PSND), 210–236 (THLN…TGEI), 376–445 (QDDT…NSSS), and 551–585 (NRTG…HFRN). The segment covering 376–388 (QDDTGSSASTIQK) has biased composition (polar residues). The span at 572-585 (SRTDRSESFDHFRN) shows a compositional bias: basic and acidic residues. Residues 592–718 (NQFS…LTNS) and 707–836 (IYLK…VAKK) contribute to the a nucleoside 3',5'-cyclic phosphate site. The 165-residue stretch at 1137–1301 (LVLGGGGARG…VDNLPVTEMT (165 aa)) folds into the PNPLA domain. The GXGXXG signature appears at 1141 to 1146 (GGGARG). Residues 1168–1172 (GTSIG) carry the GXSXG motif. The active-site Nucleophile is serine 1170. The Proton acceptor role is filled by aspartate 1288. A DGA/G motif is present at residues 1288 to 1290 (DGG).

This sequence belongs to the NTE family.

It is found in the endoplasmic reticulum membrane. It carries out the reaction a 1-acyl-sn-glycero-3-phosphocholine + H2O = sn-glycerol 3-phosphocholine + a fatty acid + H(+). With respect to regulation, inhibited by organophosphorus esters. Its function is as follows. Intracellular phospholipase B that catalyzes the double deacylation of phosphatidylcholine (PC) to glycerophosphocholine (GroPCho). Plays an important role in membrane lipid homeostasis. Responsible for the rapid PC turnover in response to inositol, elevated temperatures, or when choline is present in the growth medium. The polypeptide is Lysophospholipase NTE1 (NTE1) (Kluyveromyces lactis (strain ATCC 8585 / CBS 2359 / DSM 70799 / NBRC 1267 / NRRL Y-1140 / WM37) (Yeast)).